The following is an 83-amino-acid chain: Small ribosomal subunit protein bS16 (83 aa).

The protein belongs to the bacterial ribosomal protein bS16 family.

The chain is Small ribosomal subunit protein bS16 from Pseudomonas fluorescens (strain ATCC BAA-477 / NRRL B-23932 / Pf-5).